Reading from the N-terminus, the 566-residue chain is Tissue-type plasminogen activator (566 aa).

An N-terminal signal peptide occupies residues 1–21 (MMSAMKTEFLCVLLLCGAVFT). Positions 22–33 (SPSQETYRRLRR) are excised as a propeptide. Positions 34–36 (GAR) are cleaved as a propeptide — removed by plasmin. A Fibronectin type-I domain is found at 40–82 (VTCRDGKTQMTYRQHDSWLRPLLRGNQVEHCWCDGGRAQCHSV). 17 cysteine pairs are disulfide-bonded: cysteine 42–cysteine 72, cysteine 70–cysteine 79, cysteine 87–cysteine 98, cysteine 92–cysteine 109, cysteine 111–cysteine 120, cysteine 128–cysteine 209, cysteine 149–cysteine 191, cysteine 180–cysteine 204, cysteine 219–cysteine 300, cysteine 240–cysteine 282, cysteine 271–cysteine 295, cysteine 303–cysteine 434, cysteine 346–cysteine 362, cysteine 354–cysteine 423, cysteine 448–cysteine 523, cysteine 480–cysteine 496, and cysteine 513–cysteine 541. Positions 43-53 (RDGKTQMTYRQ) are important for binding to annexin A2. One can recognise an EGF-like domain in the interval 83-121 (PVRSCSEPWCFNGGTCRQALYSSDFVCQCPEGFMGKLCE). 2 consecutive Kringle domains span residues 128 to 209 (CYKD…TPAC) and 219 to 300 (CYTG…VPQC). The N-linked (GlcNAc...) asparagine glycan is linked to asparagine 153. Positions 315-565 (IKGGLFADIT…YLDWIRDNTR (251 aa)) constitute a Peptidase S1 domain. Active-site charge relay system residues include histidine 361 and aspartate 410. N-linked (GlcNAc...) asparagine glycosylation occurs at asparagine 487. The Charge relay system role is filled by serine 517.

Belongs to the peptidase S1 family. In terms of assembly, heterodimer of chain A and chain B held by a disulfide bond. Binds to fibrin with high affinity. This interaction leads to an increase in the catalytic efficiency of the enzyme due to an increase in affinity for plasminogen. Similarly, binding to heparin increases the activation of plasminogen. Binds to annexin A2, cytokeratin-8, fibronectin and laminin. Binds to mannose receptor and the low-density lipoprotein receptor-related protein (LRP1); these proteins are involved in TPA clearance. Binds LRP1B; binding is followed by internalization and degradation. Forms heterodimer with SERPINA5. Interacts with SERPINE1. In complex with SERPINE1, interacts with SORL1. Post-translationally, the single chain, almost fully active enzyme, can be further processed into a two-chain fully active form by a cleavage after Arg-314 catalyzed by plasmin, tissue kallikrein or factor Xa.

It is found in the secreted. Its subcellular location is the extracellular space. The catalysed reaction is Specific cleavage of Arg-|-Val bond in plasminogen to form plasmin.. Its activity is regulated as follows. Inhibited by SERPINA5. Inhibited by SERPINE1. In terms of biological role, converts the abundant, but inactive, zymogen plasminogen to plasmin by hydrolyzing a single Arg-Val bond in plasminogen. By controlling plasmin-mediated proteolysis, it plays an important role in tissue remodeling and degradation, in cell migration and many other physiopathological events. During oocyte activation, plays a role in cortical granule reaction in the zona reaction, which contributes to the block to polyspermy. The protein is Tissue-type plasminogen activator (PLAT) of Bos taurus (Bovine).